Here is a 329-residue protein sequence, read N- to C-terminus: MATGQKLMRAVRVFEFGGPEVLKLRSDIAVPIPKDHQVLIKVHACGVNPVETYIRSGTYSRKPLLPYTPGSDVAGVIEAVGDNASAFKKGDRVFTSSTISGGYAEYALAADHTVYKLPEKLDFKQGAAIGIPYFTAYRALIHSACVKAGESVLVHGASGGVGLAACQIARAYGLKILGTAGTEEGQKIVLQNGAHEVFNHREVNYIDKIKKYVGEKGIDIIIEMLANVNLSKDLSLLSHGGRVIVVGSRGTIEINPRDTMAKESSIIGVTLFSSTKEEFQQYAAALQAGMEIGWLKPVIGSQYPLEKVAEAHENIIHGSGATGKMILLL.

A2 is subject to N-acetylalanine. An N6-acetyllysine modification is found at K23. NADP(+) contacts are provided by residues Y53, 158 to 161 (SGGV), G181, H200, N229, 246 to 249 (VGSR), and 269 to 271 (VTL). Position 248 is a phosphoserine (S248). N6-succinyllysine is present on K296.

It belongs to the zinc-containing alcohol dehydrogenase family. Quinone oxidoreductase subfamily. As to quaternary structure, homotetramer. As to expression, only very low amounts in the lens.

Its subcellular location is the cytoplasm. The enzyme catalyses 2 a quinone + NADPH + H(+) = 2 a 1,4-benzosemiquinone + NADP(+). Functionally, does not have alcohol dehydrogenase activity. Binds NADP and acts through a one-electron transfer process. Orthoquinones, such as 1,2-naphthoquinone or 9,10-phenanthrenequinone, are the best substrates (in vitro). May act in the detoxification of xenobiotics. Interacts with (AU)-rich elements (ARE) in the 3'-UTR of target mRNA species. Enhances the stability of mRNA coding for BCL2. NADPH binding interferes with mRNA binding. The sequence is that of Quinone oxidoreductase (CRYZ) from Homo sapiens (Human).